A 213-amino-acid chain; its full sequence is Orotate phosphoribosyltransferase (213 aa).

5-phospho-alpha-D-ribose 1-diphosphate is bound at residue Lys26. 34–35 (FF) provides a ligand contact to orotate. Residues 72–73 (YK), Arg99, Lys100, Lys103, His105, and 124–132 (DDVITAGTA) each bind 5-phospho-alpha-D-ribose 1-diphosphate. Orotate-binding residues include Thr128 and Arg156.

It belongs to the purine/pyrimidine phosphoribosyltransferase family. PyrE subfamily. Homodimer. The cofactor is Mg(2+).

The catalysed reaction is orotidine 5'-phosphate + diphosphate = orotate + 5-phospho-alpha-D-ribose 1-diphosphate. It functions in the pathway pyrimidine metabolism; UMP biosynthesis via de novo pathway; UMP from orotate: step 1/2. Its function is as follows. Catalyzes the transfer of a ribosyl phosphate group from 5-phosphoribose 1-diphosphate to orotate, leading to the formation of orotidine monophosphate (OMP). This chain is Orotate phosphoribosyltransferase, found in Erwinia tasmaniensis (strain DSM 17950 / CFBP 7177 / CIP 109463 / NCPPB 4357 / Et1/99).